The following is a 42-amino-acid chain: Photosystem I reaction center subunit IX (42 aa).

A helical membrane pass occupies residues 7 to 27 (YLSTAPVLATIWFIILAGLLI).

The protein belongs to the PsaJ family.

The protein localises to the plastid. Its subcellular location is the chloroplast thylakoid membrane. Functionally, may help in the organization of the PsaE and PsaF subunits. The protein is Photosystem I reaction center subunit IX of Mesostigma viride (Green alga).